The chain runs to 340 residues: Glycerol-3-phosphate dehydrogenase [NAD(P)+] (340 aa).

4 residues coordinate NADPH: serine 11, tryptophan 12, arginine 33, and lysine 106. Residues lysine 106, glycine 137, and serine 139 each coordinate sn-glycerol 3-phosphate. Alanine 141 contacts NADPH. Sn-glycerol 3-phosphate contacts are provided by lysine 192, aspartate 245, serine 255, arginine 256, and asparagine 257. Lysine 192 (proton acceptor) is an active-site residue. Arginine 256 provides a ligand contact to NADPH. Residues valine 280 and glutamate 282 each coordinate NADPH.

It belongs to the NAD-dependent glycerol-3-phosphate dehydrogenase family.

Its subcellular location is the cytoplasm. It catalyses the reaction sn-glycerol 3-phosphate + NAD(+) = dihydroxyacetone phosphate + NADH + H(+). The enzyme catalyses sn-glycerol 3-phosphate + NADP(+) = dihydroxyacetone phosphate + NADPH + H(+). The protein operates within membrane lipid metabolism; glycerophospholipid metabolism. Functionally, catalyzes the reduction of the glycolytic intermediate dihydroxyacetone phosphate (DHAP) to sn-glycerol 3-phosphate (G3P), the key precursor for phospholipid synthesis. The chain is Glycerol-3-phosphate dehydrogenase [NAD(P)+] from Bacillus cereus (strain G9842).